A 277-amino-acid chain; its full sequence is Shikimate dehydrogenase (NADP(+)) (277 aa).

Shikimate contacts are provided by residues 15–17 and Thr62; that span reads SLS. The active-site Proton acceptor is the Lys66. Asn87 and Asp102 together coordinate shikimate. Residues 127 to 131, 151 to 156, and Ile219 each bind NADP(+); these read GSGGA and NRTVDK. Shikimate is bound at residue Tyr221. Gly242 serves as a coordination point for NADP(+).

The protein belongs to the shikimate dehydrogenase family. In terms of assembly, homodimer.

The enzyme catalyses shikimate + NADP(+) = 3-dehydroshikimate + NADPH + H(+). It participates in metabolic intermediate biosynthesis; chorismate biosynthesis; chorismate from D-erythrose 4-phosphate and phosphoenolpyruvate: step 4/7. Its function is as follows. Involved in the biosynthesis of the chorismate, which leads to the biosynthesis of aromatic amino acids. Catalyzes the reversible NADPH linked reduction of 3-dehydroshikimate (DHSA) to yield shikimate (SA). This is Shikimate dehydrogenase (NADP(+)) from Bacillus cereus (strain B4264).